A 363-amino-acid chain; its full sequence is Dihydroorotate dehydrogenase (quinone) (363 aa).

Residues 62–66 (AGYDK) and threonine 86 each bind FMN. Lysine 66 lines the substrate pocket. 111-115 (NRLGF) serves as a coordination point for substrate. Asparagine 139 and asparagine 170 together coordinate FMN. Asparagine 170 is a binding site for substrate. The active-site Nucleophile is serine 173. Position 175 (asparagine 175) interacts with substrate. The FMN site is built by lysine 215 and serine 243. 244 to 245 (NT) is a binding site for substrate. FMN is bound by residues glycine 266, glycine 295, and 316 to 317 (YS).

The protein belongs to the dihydroorotate dehydrogenase family. Type 2 subfamily. Monomer. Requires FMN as cofactor.

The protein localises to the cell membrane. It carries out the reaction (S)-dihydroorotate + a quinone = orotate + a quinol. It participates in pyrimidine metabolism; UMP biosynthesis via de novo pathway; orotate from (S)-dihydroorotate (quinone route): step 1/1. In terms of biological role, catalyzes the conversion of dihydroorotate to orotate with quinone as electron acceptor. This Agrobacterium fabrum (strain C58 / ATCC 33970) (Agrobacterium tumefaciens (strain C58)) protein is Dihydroorotate dehydrogenase (quinone).